Reading from the N-terminus, the 662-residue chain is Probable quinol oxidase subunit 1 (662 aa).

Transmembrane regions (helical) follow at residues 14–34 (WMIT…IAVI) and 58–78 (VMYL…ALLI). Residue histidine 102 coordinates Fe(II)-heme a. Helical transmembrane passes span 103–123 (GVIM…NIVV), 140–160 (VSFW…IIGG), 187–207 (IAIQ…FVTI), 228–248 (FITT…LALM), 273–293 (FFWV…FGIY), 311–331 (MVWA…HHFF), 336–356 (GALI…PTGV), and 376–396 (MLFS…GVML). Residues histidine 279, tyrosine 283, histidine 328, and histidine 329 each contribute to the Cu cation site. A cross-link (1'-histidyl-3'-tyrosine (His-Tyr)) is located at residues 279–283 (HPEVY). Histidine 414 lines the heme a3 pocket. 5 helical membrane passes run 415–435 (FHYT…IFWY), 451–471 (CFWF…ILGL), 493–513 (ISTI…VSIV), 587–604 (PVGF…FFLI), and 608–627 (VIPA…YRSF). Histidine 416 is a Fe(II)-heme a binding site.

This sequence belongs to the heme-copper respiratory oxidase family. The cofactor is Cu cation. Ferriheme a serves as cofactor. Heme A3. is required as a cofactor.

It localises to the cell membrane. The catalysed reaction is 2 a quinol + O2 = 2 a quinone + 2 H2O. The protein operates within energy metabolism; oxidative phosphorylation. Functionally, catalyzes quinol oxidation with the concomitant reduction of oxygen to water. This Staphylococcus aureus (strain COL) protein is Probable quinol oxidase subunit 1 (qoxB).